A 417-amino-acid chain; its full sequence is Acetyltransferase cdmC (417 aa).

N-linked (GlcNAc...) asparagine glycosylation is present at asparagine 64. 3 helical membrane passes run 308–328 (IPDGYIGPSLFYMSFVGGYLV), 357–377 (GIFWVATFLTVTTPWWIYPLL), and 389–409 (LVESVGMNNALAMIGVGAFIL).

It belongs to the wax synthase family.

Its subcellular location is the membrane. The enzyme catalyses chrodrimanin A + acetyl-CoA = chrodrimanin B + CoA. It participates in secondary metabolite biosynthesis; terpenoid biosynthesis. In terms of biological role, acetyltransferase; part of the gene cluster that mediates the biosynthesis of chrodrimanin B, a meroterpenoid that acts as a potent blocker of insect GABA-gated chloride channels. The first step of the pathway is the biosynthesis of 6-hydroxymellein by the polyketide synthase cdmE. The prenyltransferase cdmH acts as a 6-hydroxymellein 5-farnesyltransferase and produces the hydrophobic metabolite verruculide C. The FAD-dependent monooxygenase cdmI further converts verruculide C into verruculide B. The terpene cyclase cdmG then produced the pentacyclic molecule 3-hydroxypentacecilide A, the backbone structure of chrodrimanin B, via folding the farnesyl moiety of the substrate into the chair-boat conformation. The short-chain dehydrogenase/reductase cdmF functions as the 3-OH dehydrogenase that oxidizes the C-3 hydroxyl group of 3-hydroxypentacecilide A and produces chrodrimanin C, the dehydrogenated product of 3-hydroxypentacecilide A. The cytochrome P450 monooxygenase cdmJ then accepts both 3-hydroxypentacecilide A and chrodrimanin C and functions as a C-7-beta-hydroxylase to produce respectively chrodrimanin H and chrodrimanin F. The dioxygenase cdmA accepts chrodrimanin H to afford chrodrimanin E, which is further transformed to chrodrimanin A by the dioxygenase cdmD. CdmA can also accept chrodrimanin C as substrate to convert it into verruculide A, which is further converted into chrodrimanin T by cdmD. The last step of the biosynthesis is proposed to be performed by the acetyltransferase cdmC which acetylates chrodrimanin A to yield chrodrimanin B. The pathway may also lead to the production of additional shunt products, including chrodrimanins T and U. The polypeptide is Acetyltransferase cdmC (Talaromyces verruculosus (Penicillium verruculosum)).